The following is a 92-amino-acid chain: Putative membrane protein insertion efficiency factor (92 aa).

It belongs to the UPF0161 family.

It localises to the cell inner membrane. Functionally, could be involved in insertion of integral membrane proteins into the membrane. In Synechococcus sp. (strain CC9605), this protein is Putative membrane protein insertion efficiency factor.